The sequence spans 325 residues: 4-diphosphocytidyl-2-C-methyl-D-erythritol kinase (325 aa).

Lys-22 is a catalytic residue. 110–120 provides a ligand contact to ATP; the sequence is PVAGGMAGGSA. Residue Asp-152 is part of the active site. Residues 306–325 form a disordered region; that stretch reads PAPGARVLEAVSTPSPGGRS.

Belongs to the GHMP kinase family. IspE subfamily.

The catalysed reaction is 4-CDP-2-C-methyl-D-erythritol + ATP = 4-CDP-2-C-methyl-D-erythritol 2-phosphate + ADP + H(+). It functions in the pathway isoprenoid biosynthesis; isopentenyl diphosphate biosynthesis via DXP pathway; isopentenyl diphosphate from 1-deoxy-D-xylulose 5-phosphate: step 3/6. In terms of biological role, catalyzes the phosphorylation of the position 2 hydroxy group of 4-diphosphocytidyl-2C-methyl-D-erythritol. This chain is 4-diphosphocytidyl-2-C-methyl-D-erythritol kinase, found in Kineococcus radiotolerans (strain ATCC BAA-149 / DSM 14245 / SRS30216).